The chain runs to 205 residues: NADH-quinone oxidoreductase subunit C (205 aa).

It belongs to the complex I 30 kDa subunit family. NDH-1 is composed of 14 different subunits. Subunits NuoB, C, D, E, F, and G constitute the peripheral sector of the complex.

Its subcellular location is the cell inner membrane. The catalysed reaction is a quinone + NADH + 5 H(+)(in) = a quinol + NAD(+) + 4 H(+)(out). In terms of biological role, NDH-1 shuttles electrons from NADH, via FMN and iron-sulfur (Fe-S) centers, to quinones in the respiratory chain. The immediate electron acceptor for the enzyme in this species is believed to be ubiquinone. Couples the redox reaction to proton translocation (for every two electrons transferred, four hydrogen ions are translocated across the cytoplasmic membrane), and thus conserves the redox energy in a proton gradient. This is NADH-quinone oxidoreductase subunit C from Nitrosospira multiformis (strain ATCC 25196 / NCIMB 11849 / C 71).